A 341-amino-acid chain; its full sequence is Ribose-phosphate pyrophosphokinase 5 (341 aa).

Residues D152, H154, and D167 each coordinate Mg(2+).

This sequence belongs to the ribose-phosphate pyrophosphokinase family.

It is found in the cytoplasm. The catalysed reaction is D-ribose 5-phosphate + ATP = 5-phospho-alpha-D-ribose 1-diphosphate + AMP + H(+). Its pathway is metabolic intermediate biosynthesis; 5-phospho-alpha-D-ribose 1-diphosphate biosynthesis; 5-phospho-alpha-D-ribose 1-diphosphate from D-ribose 5-phosphate (route I): step 1/1. In terms of biological role, 5-phosphoribose 1-diphosphate synthase involved in nucleotide, histidine, and tryptophan biosynthesis. Active in heteromultimeric complexes with other 5-phosphoribose 1-diphosphate synthases. This Schizosaccharomyces pombe (strain 972 / ATCC 24843) (Fission yeast) protein is Ribose-phosphate pyrophosphokinase 5.